A 312-amino-acid polypeptide reads, in one-letter code: Ribosomal RNA small subunit methyltransferase H (312 aa).

S-adenosyl-L-methionine contacts are provided by residues 33–35, Asp-52, Phe-81, Asp-102, and Gln-109; that span reads GGH.

The protein belongs to the methyltransferase superfamily. RsmH family.

It is found in the cytoplasm. It carries out the reaction cytidine(1402) in 16S rRNA + S-adenosyl-L-methionine = N(4)-methylcytidine(1402) in 16S rRNA + S-adenosyl-L-homocysteine + H(+). Its function is as follows. Specifically methylates the N4 position of cytidine in position 1402 (C1402) of 16S rRNA. This chain is Ribosomal RNA small subunit methyltransferase H, found in Leuconostoc mesenteroides subsp. mesenteroides (strain ATCC 8293 / DSM 20343 / BCRC 11652 / CCM 1803 / JCM 6124 / NCDO 523 / NBRC 100496 / NCIMB 8023 / NCTC 12954 / NRRL B-1118 / 37Y).